The sequence spans 136 residues: Ribonuclease YqgF (136 aa).

This sequence belongs to the YqgF nuclease family. As to quaternary structure, monomer; also forms low amounts of dimers. The cofactor is Mn(2+).

It localises to the cytoplasm. Its function is as follows. Has robust sequence-specific RNase activity, acting as a 5'-3' exo/endonuclease on ssRNA substrates with minimally 3 consecutive adenine bases. Has no detectable nuclease activity on dsRNA, dsDNA or Holliday junction DNA. The protein is Ribonuclease YqgF of Deinococcus radiodurans (strain ATCC 13939 / DSM 20539 / JCM 16871 / CCUG 27074 / LMG 4051 / NBRC 15346 / NCIMB 9279 / VKM B-1422 / R1).